The primary structure comprises 129 residues: Small ribosomal subunit protein uS8my (129 aa).

It belongs to the universal ribosomal protein uS8 family. In terms of assembly, component of the mitochondrial ribosome small subunit.

Its subcellular location is the mitochondrion. The polypeptide is Small ribosomal subunit protein uS8my (RPS15AE) (Arabidopsis thaliana (Mouse-ear cress)).